Here is a 488-residue protein sequence, read N- to C-terminus: 3-octaprenyl-4-hydroxybenzoate carboxy-lyase (488 aa).

Asparagine 172 contributes to the Mn(2+) binding site. Residues 175–177 (IYR), 189–191 (RWL), and 194–195 (RG) contribute to the prenylated FMN site. Glutamate 238 lines the Mn(2+) pocket. Residue aspartate 287 is the Proton donor of the active site.

This sequence belongs to the UbiD family. As to quaternary structure, homohexamer. It depends on prenylated FMN as a cofactor. The cofactor is Mn(2+).

The protein resides in the cell membrane. It carries out the reaction a 4-hydroxy-3-(all-trans-polyprenyl)benzoate + H(+) = a 2-(all-trans-polyprenyl)phenol + CO2. It participates in cofactor biosynthesis; ubiquinone biosynthesis. In terms of biological role, catalyzes the decarboxylation of 3-octaprenyl-4-hydroxy benzoate to 2-octaprenylphenol, an intermediate step in ubiquinone biosynthesis. This chain is 3-octaprenyl-4-hydroxybenzoate carboxy-lyase, found in Pseudomonas putida (strain GB-1).